The chain runs to 95 residues: Putative protein RDUR (95 aa).

The span at 1-12 (MNNSFNKEDRMS) shows a compositional bias: basic and acidic residues. Residues 1–20 (MNNSFNKEDRMSSDTMVGSC) form a disordered region.

Could play a role in innate immunity against viruses. This is Putative protein RDUR from Homo sapiens (Human).